Consider the following 204-residue polypeptide: Probable nicotinate-nucleotide adenylyltransferase (204 aa).

The protein belongs to the NadD family.

It catalyses the reaction nicotinate beta-D-ribonucleotide + ATP + H(+) = deamido-NAD(+) + diphosphate. Its pathway is cofactor biosynthesis; NAD(+) biosynthesis; deamido-NAD(+) from nicotinate D-ribonucleotide: step 1/1. Its function is as follows. Catalyzes the reversible adenylation of nicotinate mononucleotide (NaMN) to nicotinic acid adenine dinucleotide (NaAD). The protein is Probable nicotinate-nucleotide adenylyltransferase of Mycolicibacterium gilvum (strain PYR-GCK) (Mycobacterium gilvum (strain PYR-GCK)).